The following is a 627-amino-acid chain: DNA mismatch repair protein MutL (627 aa).

Basic and acidic residues predominate over residues 354–364 (DEKPPEKKVPE). Residues 354 to 374 (DEKPPEKKVPEKSTAPSYSPM) are disordered.

This sequence belongs to the DNA mismatch repair MutL/HexB family.

Functionally, this protein is involved in the repair of mismatches in DNA. It is required for dam-dependent methyl-directed DNA mismatch repair. May act as a 'molecular matchmaker', a protein that promotes the formation of a stable complex between two or more DNA-binding proteins in an ATP-dependent manner without itself being part of a final effector complex. Overexpression of mutSL partially suppresses the high spontaneous mutation frequency of a ytkD/mutM/mutY triple disruption which lacks the system required to prevent damage by oxidized guanine (8-oxo-dGTP). This suggests that MutSL also functions to repair mismatches due to oxidative stress in both growing and stationary phase cells. The chain is DNA mismatch repair protein MutL from Bacillus subtilis (strain 168).